A 351-amino-acid polypeptide reads, in one-letter code: Farnesyl pyrophosphate synthase (351 aa).

Residues Lys-51, Arg-54, and Gln-92 each contribute to the isopentenyl diphosphate site. Asp-99 and Asp-103 together coordinate Mg(2+). Arg-108 is a binding site for dimethylallyl diphosphate. Arg-109 is an isopentenyl diphosphate binding site. Residues Lys-196, Thr-197, Gln-236, Lys-253, and Lys-262 each contribute to the dimethylallyl diphosphate site.

It belongs to the FPP/GGPP synthase family. Mg(2+) serves as cofactor.

It catalyses the reaction isopentenyl diphosphate + dimethylallyl diphosphate = (2E)-geranyl diphosphate + diphosphate. It carries out the reaction isopentenyl diphosphate + (2E)-geranyl diphosphate = (2E,6E)-farnesyl diphosphate + diphosphate. It participates in isoprenoid biosynthesis; farnesyl diphosphate biosynthesis; farnesyl diphosphate from geranyl diphosphate and isopentenyl diphosphate: step 1/1. The protein operates within isoprenoid biosynthesis; geranyl diphosphate biosynthesis; geranyl diphosphate from dimethylallyl diphosphate and isopentenyl diphosphate: step 1/1. In terms of biological role, farnesyl pyrophosphate synthase; part of the second module of ergosterol biosynthesis pathway that includes the middle steps of the pathway. ERG20 catalyzes the sequential condensation of isopentenyl pyrophosphate with dimethylallyl pyrophosphate, and then with the resultant geranylpyrophosphate to the ultimate product farnesyl pyrophosphate. The second module is carried out in the vacuole and involves the formation of farnesyl diphosphate, which is also an important intermediate in the biosynthesis of ubiquinone, dolichol, heme and prenylated proteins. Activity by the mevalonate kinase ERG12 first converts mevalonate into 5-phosphomevalonate. 5-phosphomevalonate is then further converted to 5-diphosphomevalonate by the phosphomevalonate kinase ERG8. The diphosphomevalonate decarboxylase MVD then produces isopentenyl diphosphate. The isopentenyl-diphosphate delta-isomerase IDI1 then catalyzes the 1,3-allylic rearrangement of the homoallylic substrate isopentenyl (IPP) to its highly electrophilic allylic isomer, dimethylallyl diphosphate (DMAPP). Finally the farnesyl diphosphate synthase ERG20 catalyzes the sequential condensation of isopentenyl pyrophosphate with dimethylallyl pyrophosphate, and then with the resultant geranylpyrophosphate to the ultimate product farnesyl pyrophosphate. The protein is Farnesyl pyrophosphate synthase of Candida albicans (strain SC5314 / ATCC MYA-2876) (Yeast).